The sequence spans 111 residues: Ghrelin (111 aa).

The signal sequence occupies residues 1 to 26; that stretch reads MRQMKRTAYIILLVCVLALWMDSVQA. The segment covering 28–37 has biased composition (polar residues); it reads SSFLSPSQRP. Residues 28–53 are disordered; it reads SSFLSPSQRPQGKDKKPPRVGRRDSD. Residue serine 29 is the site of O-decanoyl serine; alternate attachment. Serine 29 is lipidated: O-hexanoyl serine; alternate. The O-octanoyl serine; alternate moiety is linked to residue serine 29. Basic and acidic residues predominate over residues 38–53; sequence QGKDKKPPRVGRRDSD. At valine 47 the chain carries Valine amide. Residues 51 to 111 constitute a propeptide, removed in mature form; sequence DSDGILDLFM…DLLMDTPAKE (61 aa).

This sequence belongs to the motilin family. In terms of processing, O-octanoylated by GOAT/MBOAT4. O-octanoylation or O-decanoylation is essential for activity. The O-decanoylated form ghrelin-21-C10 differs in the length of the carbon backbone of the carboxylic acid forming an ester bond with Ser-29. 44% of eel ghrelin is O-decanoylated. Highest levels in stomach and anterior intestine. Lower levels in posterior intestine, kidney and brain. Low levels in heart, head kidney and middle intestine.

It localises to the secreted. In terms of biological role, ligand for growth hormone secretagogue receptor type 1 (GHSR). Induces the release of growth hormone from the pituitary. Has an appetite-stimulating effect, induces adiposity and stimulates gastric acid secretion. Involved in growth regulation. The chain is Ghrelin (ghrl) from Anguilla japonica (Japanese eel).